We begin with the raw amino-acid sequence, 283 residues long: MMTHWPSPAKLNLFLYITGQRADGYHTLQTLFQFLDYGDTLHIEPRHDGEIHLLTPVNDVENEDNLIVRAARLLMKVASESGRLPAGSGADISIEKRLPMGGGLGGGSSNAATVLVALNHLWQCGLSIDELATLGLTLGADVPVFVRGHAAFAEGVGEILTPVNPPEKWYLVAHPGVSIPTPVIFKDPQLPRNTPKRSIDTLLKCEFSNDCEVIARKRFREVDAALSWLLEYAPSRLTGTGACVFAEFDTESCARQVLEQAPEWLNAFVAKGVNLSPLHRELL.

The active site involves Lys-10. Residue 99–109 participates in ATP binding; the sequence is PMGGGLGGGSS. The active site involves Asp-141.

The protein belongs to the GHMP kinase family. IspE subfamily. Homodimer.

It catalyses the reaction 4-CDP-2-C-methyl-D-erythritol + ATP = 4-CDP-2-C-methyl-D-erythritol 2-phosphate + ADP + H(+). The protein operates within isoprenoid biosynthesis; isopentenyl diphosphate biosynthesis via DXP pathway; isopentenyl diphosphate from 1-deoxy-D-xylulose 5-phosphate: step 3/6. Its function is as follows. Catalyzes the phosphorylation of the position 2 hydroxy group of 4-diphosphocytidyl-2C-methyl-D-erythritol. This Salmonella paratyphi C (strain RKS4594) protein is 4-diphosphocytidyl-2-C-methyl-D-erythritol kinase.